Reading from the N-terminus, the 370-residue chain is 3-dehydroquinate synthase (370 aa).

NAD(+) is bound by residues 107 to 111, 131 to 132, Lys-144, and Lys-153; these read GVIGD and TS. 3 residues coordinate Zn(2+): Glu-186, His-249, and His-267.

Belongs to the sugar phosphate cyclases superfamily. Dehydroquinate synthase family. Co(2+) is required as a cofactor. Zn(2+) serves as cofactor. The cofactor is NAD(+).

The protein localises to the cytoplasm. It catalyses the reaction 7-phospho-2-dehydro-3-deoxy-D-arabino-heptonate = 3-dehydroquinate + phosphate. Its pathway is metabolic intermediate biosynthesis; chorismate biosynthesis; chorismate from D-erythrose 4-phosphate and phosphoenolpyruvate: step 2/7. Functionally, catalyzes the conversion of 3-deoxy-D-arabino-heptulosonate 7-phosphate (DAHP) to dehydroquinate (DHQ). In Jannaschia sp. (strain CCS1), this protein is 3-dehydroquinate synthase.